A 54-amino-acid polypeptide reads, in one-letter code: Photoreceptor disk component PRCD (54 aa).

A lipid anchor (S-palmitoyl cysteine) is attached at Cys-2. A disordered region spans residues 25–54 (PEPSDVDGAARGSSLDADPQSSGREKEPLK).

This sequence belongs to the PRCD family. Interacts with RHO/rhodopsin; the interaction promotes PRCD stability. In terms of processing, palmitoylated at Cys-2. Palmitoylation is essential for protein stability and trafficking to the photoreceptor outer segment, but does not appear to be essential for membrane localization. Probably palmitoylated by ZDHHC3. Phosphorylated.

The protein resides in the cell projection. It is found in the cilium. It localises to the photoreceptor outer segment. Its subcellular location is the membrane. The protein localises to the endoplasmic reticulum. The protein resides in the golgi apparatus. Functionally, involved in vision. The protein is Photoreceptor disk component PRCD of Homo sapiens (Human).